Here is a 180-residue protein sequence, read N- to C-terminus: Fetal and adult testis-expressed transcript protein homolog (180 aa).

The segment at 77 to 108 (GPQLRGVGVVGEQGDGGAQPQENPGGSQGMRS) is disordered. The span at 84-93 (GVVGEQGDGG) shows a compositional bias: gly residues. The span at 96-107 (PQENPGGSQGMR) shows a compositional bias: polar residues. A helical transmembrane segment spans residues 160 to 178 (VLLFTMLLSSCITNLWLWM).

As to quaternary structure, interacts with BIK and RNF183. Interacts with IMMT/MIC60and EMD.

It localises to the mitochondrion. The protein localises to the mitochondrion outer membrane. It is found in the endoplasmic reticulum membrane. Its function is as follows. Involved in the regulation of endoplasmic reticulum (ER)-mitochondria coupling. Negatively regulates the ER-mitochondria distance and Ca(2+) transfer from ER to mitochondria possibly implicating it in the regulation of apoptosis. May collaborate with RNF183 to restrain BIK protein levels thus regulating apoptotic signaling. This chain is Fetal and adult testis-expressed transcript protein homolog (FATE1), found in Bos taurus (Bovine).